Reading from the N-terminus, the 210-residue chain is Thiamine-phosphate synthase (210 aa).

4-amino-2-methyl-5-(diphosphooxymethyl)pyrimidine contacts are provided by residues 36-40 (QLRIK) and Asn-68. Asp-69 and Asp-88 together coordinate Mg(2+). Ser-107 is a 4-amino-2-methyl-5-(diphosphooxymethyl)pyrimidine binding site. 133–135 (TQT) is a 2-[(2R,5Z)-2-carboxy-4-methylthiazol-5(2H)-ylidene]ethyl phosphate binding site. Lys-136 is a binding site for 4-amino-2-methyl-5-(diphosphooxymethyl)pyrimidine. 2-[(2R,5Z)-2-carboxy-4-methylthiazol-5(2H)-ylidene]ethyl phosphate contacts are provided by residues Gly-165 and 185-186 (VS).

It belongs to the thiamine-phosphate synthase family. Mg(2+) is required as a cofactor.

It carries out the reaction 2-[(2R,5Z)-2-carboxy-4-methylthiazol-5(2H)-ylidene]ethyl phosphate + 4-amino-2-methyl-5-(diphosphooxymethyl)pyrimidine + 2 H(+) = thiamine phosphate + CO2 + diphosphate. It catalyses the reaction 2-(2-carboxy-4-methylthiazol-5-yl)ethyl phosphate + 4-amino-2-methyl-5-(diphosphooxymethyl)pyrimidine + 2 H(+) = thiamine phosphate + CO2 + diphosphate. The catalysed reaction is 4-methyl-5-(2-phosphooxyethyl)-thiazole + 4-amino-2-methyl-5-(diphosphooxymethyl)pyrimidine + H(+) = thiamine phosphate + diphosphate. Its pathway is cofactor biosynthesis; thiamine diphosphate biosynthesis; thiamine phosphate from 4-amino-2-methyl-5-diphosphomethylpyrimidine and 4-methyl-5-(2-phosphoethyl)-thiazole: step 1/1. Its function is as follows. Condenses 4-methyl-5-(beta-hydroxyethyl)thiazole monophosphate (THZ-P) and 2-methyl-4-amino-5-hydroxymethyl pyrimidine pyrophosphate (HMP-PP) to form thiamine monophosphate (TMP). In Cronobacter sakazakii (strain ATCC BAA-894) (Enterobacter sakazakii), this protein is Thiamine-phosphate synthase.